Reading from the N-terminus, the 371-residue chain is Peptide chain release factor 2 (371 aa).

Residue glutamine 253 is modified to N5-methylglutamine.

Belongs to the prokaryotic/mitochondrial release factor family. Methylated by PrmC. Methylation increases the termination efficiency of RF2.

Its subcellular location is the cytoplasm. Peptide chain release factor 2 directs the termination of translation in response to the peptide chain termination codons UGA and UAA. In Mycobacterium sp. (strain JLS), this protein is Peptide chain release factor 2.